Consider the following 265-residue polypeptide: Keratinocyte-associated transmembrane protein 2 (265 aa).

A signal peptide spans 1-49 (MAAAALKRMRGPAQAKLLPGSAIQALVGLARPLVLALLLVSAALSSVVS). Residues 50–196 (RTDSPSPTVL…MPSSNIEEED (147 aa)) lie on the Extracellular side of the membrane. Residues 72 to 96 (THENQTKPSISQISTTLPPTMSTEK) are compositionally biased toward polar residues. Disordered stretches follow at residues 72-123 (THEN…EDPS) and 135-168 (SPST…SDDT). An N-linked (GlcNAc...) asparagine glycan is attached at asparagine 75. Residues 114–123 (EEADNNEDPS) show a composition bias toward acidic residues. A helical membrane pass occupies residues 197 to 217 (SHFFFHLIIFAFCIAVVYITY). The Cytoplasmic segment spans residues 218–265 (HNKRKIFLLVQSRKWRDGLCSKTVEYHRLDQNVNEAMPSLKITNDYTF). Serine 229 and serine 256 each carry phosphoserine.

It is found in the membrane. The polypeptide is Keratinocyte-associated transmembrane protein 2 (KCT2) (Pongo abelii (Sumatran orangutan)).